A 240-amino-acid chain; its full sequence is Ribonuclease HII (240 aa).

Residues 31–222 (RLIAGVDEAG…VRRALGLETA (192 aa)) enclose the RNase H type-2 domain. Residues Asp-37, Glu-38, and Asp-130 each coordinate a divalent metal cation.

This sequence belongs to the RNase HII family. It depends on Mn(2+) as a cofactor. Mg(2+) serves as cofactor.

It localises to the cytoplasm. It carries out the reaction Endonucleolytic cleavage to 5'-phosphomonoester.. Functionally, endonuclease that specifically degrades the RNA of RNA-DNA hybrids. In Xanthomonas campestris pv. campestris (strain 8004), this protein is Ribonuclease HII.